The following is a 492-amino-acid chain: Cysteine--tRNA ligase (492 aa).

Residue Cys31 coordinates Zn(2+). The 'HIGH' region motif lies at 33–43 (PTVYGDPHLGH). Zn(2+) contacts are provided by Cys226, His251, and Glu255. Positions 283–287 (KMGKS) match the 'KMSKS' region motif. Lys286 is a binding site for ATP.

Belongs to the class-I aminoacyl-tRNA synthetase family. In terms of assembly, monomer. It depends on Zn(2+) as a cofactor.

The protein resides in the cytoplasm. The enzyme catalyses tRNA(Cys) + L-cysteine + ATP = L-cysteinyl-tRNA(Cys) + AMP + diphosphate. The protein is Cysteine--tRNA ligase of Azobacteroides pseudotrichonymphae genomovar. CFP2.